The chain runs to 513 residues: Probable vesicular acetylcholine transporter-A (513 aa).

Over 1–39 (MATEESGGLAQTAAVKLSEMGERTKQLGNAIQDPERQRR) the chain is Cytoplasmic. A helical transmembrane segment spans residues 40 to 60 (IILVIVCVALLLDNMLYMVIV). At 61–98 (PIVPDYLAHLESESEQAHVKGNSSINITQNENFDLQIG) the chain is on the lumenal, vesicle side. N-linked (GlcNAc...) asparagine glycans are attached at residues Asn82 and Asn86. A helical transmembrane segment spans residues 99 to 119 (VLFASKAILQLLVNPLTGTFI). The Cytoplasmic segment spans residues 120 to 125 (DRVGYD). Residues 126 to 146 (IPLLIGLSIMFVSTCIFAFAE) form a helical membrane-spanning segment. At 147–156 (NYATLFMARS) the chain is on the lumenal, vesicle side. A helical transmembrane segment spans residues 157 to 174 (LQGLGSAFADTSGIAMIA). Residues 175–186 (DKYAEESERSRA) lie on the Cytoplasmic side of the membrane. Residues 187-207 (LGIALAFISFGSLAAPPFGGV) form a helical membrane-spanning segment. The Lumenal, vesicle segment spans residues 208–215 (LYEFAGKR). Residues 216-236 (FPFIALACVCLADGILCLTVL) form a helical membrane-spanning segment. The Cytoplasmic segment spans residues 237 to 257 (KPFSSRTRENMPVGTPIYKLM). A helical transmembrane segment spans residues 258 to 278 (IDPYIAVVAGALTTCNIPLAF). Topologically, residues 279–296 (LEPTIANWMEETMNASQW) are lumenal, vesicle. The N-linked (GlcNAc...) asparagine glycan is linked to Asn292. The helical transmembrane segment at 297-317 (QIGITWLPAFFPHILGVYLTV) threads the bilayer. At 318-327 (KLAAKYPHLQ) the chain is on the cytoplasmic side. Residues 328 to 348 (WFYGALGMVIIGASSCIVPAC) traverse the membrane as a helical segment. At 349–353 (KNFEQ) the chain is on the lumenal, vesicle side. Residues 354 to 374 (LIIPLCGVCFGIALVDTALLP) form a helical membrane-spanning segment. Topologically, residues 375–390 (TLAFLVDVRHVSVYGS) are cytoplasmic. The helical transmembrane segment at 391–411 (VYAIADISYCVAYALGPIVAG) threads the bilayer. Over 412–418 (KIVHDLG) the chain is Lumenal, vesicle. The helical transmembrane segment at 419–439 (FVQLNLGMGLANVLYAPALLL) threads the bilayer. Residues 440–513 (LRNVSLMKPS…EEETSEPEYI (74 aa)) lie on the Cytoplasmic side of the membrane. The disordered stretch occupies residues 475–513 (RKKHGYSSSGNCVPIDENGTFAGQSKSFSEEETSEPEYI). Positions 504-513 (EEETSEPEYI) are enriched in acidic residues.

It belongs to the major facilitator superfamily. Vesicular transporter family.

It localises to the membrane. Involved in acetylcholine transport into synaptic vesicles. This is Probable vesicular acetylcholine transporter-A from Danio rerio (Zebrafish).